We begin with the raw amino-acid sequence, 367 residues long: MTPEILPIEQYDDQLAEKTERLRGMMAPFNAPEPVVFRSPVSHYRMRAEFRIWHEGDELYHIMFDQQTKQRIRVDRFPAASELINRLMPELLAAIQPDSVLRRKLFQIDYLSTLSGEVIVSLLYHRALDEEWQEHARALRDSLTAQGFRLQLIGRATKTKICLDRDYVDECLPVAGRDMIYRQVENSFTQPNAAINIQMLEWALDATAGSTGDLLELYCGNGNFSLALARNFERVLATEIAKPSVAAAQYNIAANQIENVQIIRMAAEEFTQAMQGVRQFNRLQGIDLTSYQCETIFVDPPRSGLDDETVKLVQAYPRILYISCNPETLSHNLQTLSETHDIRRLALFDQFPYTHHMECGVLLEKRQ.

S-adenosyl-L-methionine-binding residues include Gln190, Tyr218, Asn223, Glu239, and Asp299. Cys324 (nucleophile) is an active-site residue. The Proton acceptor role is filled by Glu358.

The protein belongs to the class I-like SAM-binding methyltransferase superfamily. RNA M5U methyltransferase family. TrmA subfamily.

It catalyses the reaction uridine(54) in tRNA + S-adenosyl-L-methionine = 5-methyluridine(54) in tRNA + S-adenosyl-L-homocysteine + H(+). The enzyme catalyses uridine(341) in tmRNA + S-adenosyl-L-methionine = 5-methyluridine(341) in tmRNA + S-adenosyl-L-homocysteine + H(+). Functionally, dual-specificity methyltransferase that catalyzes the formation of 5-methyluridine at position 54 (m5U54) in all tRNAs, and that of position 341 (m5U341) in tmRNA (transfer-mRNA). This is tRNA/tmRNA (uracil-C(5))-methyltransferase from Pectobacterium carotovorum subsp. carotovorum (strain PC1).